Here is a 508-residue protein sequence, read N- to C-terminus: Serine carboxypeptidase 3 (508 aa).

The N-terminal stretch at 1-19 (MVTTPRLVSLLLLLALCAA) is a signal peptide. A propeptide spanning residues 20 to 80 (AAGALRLPPD…PGQLLERRVT (61 aa)) is cleaved from the precursor. Positions 48-67 (PKDSSSSSGRHGARVGEGNE) are disordered. Position 81 is a blocked amino end (Leu) (Leu-81). Disulfide bonds link Cys-133-Cys-373, Cys-301-Cys-316, and Cys-339-Cys-344. N-linked (GlcNAc...) asparagine glycosylation is present at Asn-151. Ser-223 is a catalytic residue. Residue Asp-411 is part of the active site. Residue Cys-414 coordinates substrate. His-468 is a catalytic residue. Positions 492–508 (EAVPEEESSTTSFYAAM) are excised as a propeptide.

This sequence belongs to the peptidase S10 family. Monomer.

It is found in the secreted. The enzyme catalyses Release of a C-terminal amino acid with broad specificity.. Inhibited by mercuric ions. This chain is Serine carboxypeptidase 3 (CBP3), found in Hordeum vulgare (Barley).